The primary structure comprises 126 residues: RuBisCO chaperone RbcX (126 aa).

It belongs to the RbcX family. In terms of assembly, homodimer. Interacts with the exposed C-terminal peptide of RbcL via its central cleft, contacts a second RbcL monomer via its peripheral polar surface.

The protein resides in the carboxysome. Its subcellular location is the cytoplasm. An RbcL-specific chaperone. Required for assembly of the RbcL8 core. The central cleft of the RbcX homodimer (RbcX2) binds the C-terminus of a RbcL monomer, stabilizing the C-terminus and probably preventing its reassociation with chaperonin GroEL-ES. At the same time the peripheral region of RbcX2 binds a second RbcL monomer, bridging the RbcL homodimers in the correct orientation. The RbcX2(2)-bound RbcL dimers then assemble into the RbcL8 core (RbcL8-(RbcX2)8). RbcS binding triggers the release of RbcX2. The polypeptide is RuBisCO chaperone RbcX (Thermosynechococcus vestitus (strain NIES-2133 / IAM M-273 / BP-1)).